The primary structure comprises 216 residues: Ribosomal RNA small subunit methyltransferase G (216 aa).

S-adenosyl-L-methionine is bound by residues G73, L78, 124–125 (AE), and R139.

It belongs to the methyltransferase superfamily. RNA methyltransferase RsmG family.

The protein localises to the cytoplasm. Specifically methylates the N7 position of guanine in position 518 of 16S rRNA. The polypeptide is Ribosomal RNA small subunit methyltransferase G (Pseudarthrobacter chlorophenolicus (strain ATCC 700700 / DSM 12829 / CIP 107037 / JCM 12360 / KCTC 9906 / NCIMB 13794 / A6) (Arthrobacter chlorophenolicus)).